Here is a 459-residue protein sequence, read N- to C-terminus: Putrescine aminotransferase (459 aa).

Pyridoxal 5'-phosphate-binding positions include 150-151 (GT) and Q274. K300 carries the post-translational modification N6-(pyridoxal phosphate)lysine. Pyridoxal 5'-phosphate is bound at residue T332.

This sequence belongs to the class-III pyridoxal-phosphate-dependent aminotransferase family. Putrescine aminotransferase subfamily. Requires pyridoxal 5'-phosphate as cofactor.

It carries out the reaction an alkane-alpha,omega-diamine + 2-oxoglutarate = an omega-aminoaldehyde + L-glutamate. The enzyme catalyses putrescine + 2-oxoglutarate = 1-pyrroline + L-glutamate + H2O. It catalyses the reaction cadaverine + 2-oxoglutarate = 5-aminopentanal + L-glutamate. It functions in the pathway amine and polyamine degradation; putrescine degradation; 4-aminobutanal from putrescine (transaminase route): step 1/1. Functionally, catalyzes the aminotransferase reaction from putrescine to 2-oxoglutarate, leading to glutamate and 4-aminobutanal, which spontaneously cyclizes to form 1-pyrroline. This is the first step in one of two pathways for putrescine degradation, where putrescine is converted into 4-aminobutanoate (gamma-aminobutyrate or GABA) via 4-aminobutanal. Also functions as a cadaverine transaminase in a a L-lysine degradation pathway to succinate that proceeds via cadaverine, glutarate and L-2-hydroxyglutarate. This Escherichia coli (strain ATCC 8739 / DSM 1576 / NBRC 3972 / NCIMB 8545 / WDCM 00012 / Crooks) protein is Putrescine aminotransferase.